Here is a 279-residue protein sequence, read N- to C-terminus: Nitrate import permease protein NrtB (279 aa).

An ABC transmembrane type-1 domain is found at 86–270; that stretch reads IAASLQRVAV…LLNALVGFIA (185 aa). The next 6 helical transmembrane spans lie at 98 to 118, 124 to 144, 151 to 171, 196 to 216, 217 to 237, and 249 to 269; these read LMAA…VLMF, IFQV…LAAF, AIFV…AVGV, VLLP…IGLS, WLAI…FFIW, and ILAI…VGFI.

The protein belongs to the binding-protein-dependent transport system permease family. CysTW subfamily. In terms of assembly, the complex is composed of two ATP-binding proteins (NrtC and NrtD), two transmembrane proteins (NrtB) and a solute-binding protein (NrtA).

It is found in the cell inner membrane. In terms of biological role, part of the ABC transporter complex NrtABCD involved in nitrate uptake. The complex is probably also involved in nitrite transport. Probably responsible for the translocation of the substrate across the membrane. This is Nitrate import permease protein NrtB from Leptolyngbya laminosa (Phormidium laminosum).